Reading from the N-terminus, the 504-residue chain is Arabinose import ATP-binding protein AraG (504 aa).

ABC transporter domains follow at residues 8–243 and 256–499; these read LSFR…MVGR and YGEE…MPKV. Residue 40–47 coordinates ATP; that stretch reads GENGAGKS.

Belongs to the ABC transporter superfamily. Arabinose importer (TC 3.A.1.2.2) family. In terms of assembly, the complex is composed of two ATP-binding proteins (AraG), two transmembrane proteins (AraH) and a solute-binding protein (AraF).

It localises to the cell inner membrane. It catalyses the reaction L-arabinose(out) + ATP + H2O = L-arabinose(in) + ADP + phosphate + H(+). In terms of biological role, part of the ABC transporter complex AraFGH involved in arabinose import. Responsible for energy coupling to the transport system. This Shigella boydii serotype 4 (strain Sb227) protein is Arabinose import ATP-binding protein AraG.